The primary structure comprises 471 residues: MSLNRRQFIQASGLALCAGMTPLAAKASGNPAALPIPPLLESRRGQPLFLTMQRAHWAFSGDRKTSIWGINGRYLGPTVRVYDGDDVKLIYSNRLNEPVAMTIGGLQVPGPLMGGAARIISPGGDWSPVLPIRQSSATCWYHANTPNRMAPHIYNGLVGLWLVEDSTSKSLPLPNHYGVDDFPLIIQDKRLDNFGVPLYNPPSSGGFVGDSLLVNGVQSPFVEVSRGWVRLRLLNASNSRRYVMRLSDGRAMNVIASDQGLLPAPMAVNQLSLAPGERREILIDMSQGEEVTLTAGESAGIMDRLRGLFEPSSILISTQILTLKPTGLLPLVTDNLPMRLLADNIIEGSISRTREFRLGDSLPGINGAMWDMTRADVQTQLGRCERWIIHADTPQAFHIQGVKFLVRSANGRPPAVEDSGWKDTVWIDNDVELLVYFMQPSSMAFPFLYYSQTLELADRGSTGQLIVQSAM.

Positions 1–27 (MSLNRRQFIQASGLALCAGMTPLAAKA) form a signal peptide, tat-type signal. One can recognise a Plastocyanin-like domain in the interval 229 to 287 (VRLRLLNASNSRRYVMRLSDGRAMNVIASDQGLLPAPMAVNQLSLAPGERREILIDMSQ).

This sequence belongs to the FtsP family. Post-translationally, predicted to be exported by the Tat system. The position of the signal peptide cleavage has not been experimentally proven.

It localises to the periplasm. Functionally, cell division protein that is required for growth during stress conditions. May be involved in protecting or stabilizing the divisomal assembly under conditions of stress. The chain is Cell division protein FtsP from Pectobacterium atrosepticum (strain SCRI 1043 / ATCC BAA-672) (Erwinia carotovora subsp. atroseptica).